Here is a 392-residue protein sequence, read N- to C-terminus: Formate-dependent phosphoribosylglycinamide formyltransferase (392 aa).

N(1)-(5-phospho-beta-D-ribosyl)glycinamide is bound by residues 20–21 (EL) and Glu-80. ATP is bound by residues Arg-112, Lys-153, 158-163 (SSGKGQ), 193-196 (EGFV), and Glu-201. Positions 117–306 (RLAAETLGLP…EFALHVRAIL (190 aa)) constitute an ATP-grasp domain. Positions 265 and 277 each coordinate Mg(2+). N(1)-(5-phospho-beta-D-ribosyl)glycinamide-binding positions include Asp-284, Lys-355, and 362-363 (RR).

It belongs to the PurK/PurT family. As to quaternary structure, homodimer.

The enzyme catalyses N(1)-(5-phospho-beta-D-ribosyl)glycinamide + formate + ATP = N(2)-formyl-N(1)-(5-phospho-beta-D-ribosyl)glycinamide + ADP + phosphate + H(+). It participates in purine metabolism; IMP biosynthesis via de novo pathway; N(2)-formyl-N(1)-(5-phospho-D-ribosyl)glycinamide from N(1)-(5-phospho-D-ribosyl)glycinamide (formate route): step 1/1. Its function is as follows. Involved in the de novo purine biosynthesis. Catalyzes the transfer of formate to 5-phospho-ribosyl-glycinamide (GAR), producing 5-phospho-ribosyl-N-formylglycinamide (FGAR). Formate is provided by PurU via hydrolysis of 10-formyl-tetrahydrofolate. The chain is Formate-dependent phosphoribosylglycinamide formyltransferase from Aeromonas hydrophila subsp. hydrophila (strain ATCC 7966 / DSM 30187 / BCRC 13018 / CCUG 14551 / JCM 1027 / KCTC 2358 / NCIMB 9240 / NCTC 8049).